Consider the following 207-residue polypeptide: Glycerol-3-phosphate acyltransferase 1 (207 aa).

The next 5 membrane-spanning stretches (helical) occupy residues 3 to 23, 53 to 73, 85 to 105, 127 to 147, and 154 to 174; these read YVIASLLGYIFGCIHGSQIVG, IVVALIDIFKATAAIFLLLIL, HIYIYLTALFVIIGHNYPITM, IALIGIGVLILFTIATDYLAV, and ISFLITTYYIFGLAPFFIVVG.

It belongs to the PlsY family. As to quaternary structure, probably interacts with PlsX.

It is found in the cell membrane. It catalyses the reaction an acyl phosphate + sn-glycerol 3-phosphate = a 1-acyl-sn-glycero-3-phosphate + phosphate. The protein operates within lipid metabolism; phospholipid metabolism. Its function is as follows. Catalyzes the transfer of an acyl group from acyl-phosphate (acyl-PO(4)) to glycerol-3-phosphate (G3P) to form lysophosphatidic acid (LPA). This enzyme utilizes acyl-phosphate as fatty acyl donor, but not acyl-CoA or acyl-ACP. This is Glycerol-3-phosphate acyltransferase 1 from Oceanobacillus iheyensis (strain DSM 14371 / CIP 107618 / JCM 11309 / KCTC 3954 / HTE831).